The following is a 325-amino-acid chain: MKTRNFSLVSALYVLLGVPLFVSAASYDDNEFSRKSRAYSELAEKTYDAGEYDVSAEYARLAEDFAQKSSVYIKETMARTTAEDAMNAARTRHAWAKNERIDRAYPTEYLLASEAIKTGGLAFDSKQYDVALTWARKALDALKNVKPESQLLAKAAKEEAARKAAEARKLEEQRIAAQKAQEERKRAEEEAARKAAEARKLEEQRIAAQKAQEERKRAEEEAARKAAEEAARKAEELEKGRVLPAQYKVTTWSIDRECFWNIAKNPAVYGNPFLWKKLYEANKDKIPQSKNPNWVEPETVLVIPSLKGEEREGLYEPNVKYRPLP.

An N-terminal signal peptide occupies residues 1-24 (MKTRNFSLVSALYVLLGVPLFVSA). Residues 159–166 (EAARKAAE) form an EAARKAAE repeat. An ARKLEEQRIAAQKAQEERKRAEE repeat occupies 167 to 189 (ARKLEEQRIAAQKAQEERKRAEE). A disordered region spans residues 176–224 (AAQKAQEERKRAEEEAARKAAEARKLEEQRIAAQKAQEERKRAEEEAAR). One copy of the EAARKAAE repeat lies at 190 to 197 (EAARKAAE). The ARKLEEQRIAAQKAQEERKRAEE repeat unit spans residues 198 to 220 (ARKLEEQRIAAQKAQEERKRAEE). The stretch at 221–228 (EAARKAAE) is one EAARKAAE repeat. An EAARKAEE repeat occupies 229-236 (EAARKAEE).

To T.phagedenis TmpB.

It is found in the cell outer membrane. In terms of biological role, tmp may serve as a porin or transport protein for large molecules. This Treponema pallidum (strain Nichols) protein is Treponemal membrane protein B (tmpB).